A 325-amino-acid chain; its full sequence is Putative carboxypeptidase YocD (325 aa).

Ser-111 serves as the catalytic Nucleophile. Residues Glu-228 and His-296 each act as charge relay system in the active site.

This sequence belongs to the peptidase S66 family.

This Bacillus subtilis (strain 168) protein is Putative carboxypeptidase YocD (yocD).